Here is a 274-residue protein sequence, read N- to C-terminus: 3-methyl-2-oxobutanoate hydroxymethyltransferase (274 aa).

Positions 44 and 83 each coordinate Mg(2+). 3-methyl-2-oxobutanoate-binding positions include D44 to S45, D83, and K113. E115 contributes to the Mg(2+) binding site. The Proton acceptor role is filled by E182.

It belongs to the PanB family. As to quaternary structure, homodecamer; pentamer of dimers. It depends on Mg(2+) as a cofactor.

The protein resides in the cytoplasm. The enzyme catalyses 3-methyl-2-oxobutanoate + (6R)-5,10-methylene-5,6,7,8-tetrahydrofolate + H2O = 2-dehydropantoate + (6S)-5,6,7,8-tetrahydrofolate. It participates in cofactor biosynthesis; (R)-pantothenate biosynthesis; (R)-pantoate from 3-methyl-2-oxobutanoate: step 1/2. Functionally, catalyzes the reversible reaction in which hydroxymethyl group from 5,10-methylenetetrahydrofolate is transferred onto alpha-ketoisovalerate to form ketopantoate. The polypeptide is 3-methyl-2-oxobutanoate hydroxymethyltransferase (Campylobacter jejuni subsp. jejuni serotype O:6 (strain 81116 / NCTC 11828)).